A 92-amino-acid polypeptide reads, in one-letter code: PqqA binding protein (92 aa).

This sequence belongs to the PqqD family. As to quaternary structure, monomer. Interacts with PqqE.

The protein operates within cofactor biosynthesis; pyrroloquinoline quinone biosynthesis. Functions as a PqqA binding protein and presents PqqA to PqqE, in the pyrroloquinoline quinone (PQQ) biosynthetic pathway. This chain is PqqA binding protein, found in Pseudomonas paraeruginosa (strain DSM 24068 / PA7) (Pseudomonas aeruginosa (strain PA7)).